The primary structure comprises 118 residues: Small ribosomal subunit protein uS13 (118 aa).

Residues 92-118 (RKGLPVRGQRTKTNARTRKGPRKPIRK) are disordered.

It belongs to the universal ribosomal protein uS13 family. As to quaternary structure, part of the 30S ribosomal subunit. Forms a loose heterodimer with protein S19. Forms two bridges to the 50S subunit in the 70S ribosome.

Located at the top of the head of the 30S subunit, it contacts several helices of the 16S rRNA. In the 70S ribosome it contacts the 23S rRNA (bridge B1a) and protein L5 of the 50S subunit (bridge B1b), connecting the 2 subunits; these bridges are implicated in subunit movement. Contacts the tRNAs in the A and P-sites. The chain is Small ribosomal subunit protein uS13 from Pseudomonas putida (strain W619).